Here is a 161-residue protein sequence, read N- to C-terminus: Protein-export protein SecB (161 aa).

It belongs to the SecB family. Homotetramer, a dimer of dimers. One homotetramer interacts with 1 SecA dimer.

The protein localises to the cytoplasm. Its function is as follows. One of the proteins required for the normal export of preproteins out of the cell cytoplasm. It is a molecular chaperone that binds to a subset of precursor proteins, maintaining them in a translocation-competent state. It also specifically binds to its receptor SecA. The polypeptide is Protein-export protein SecB (Methylocella silvestris (strain DSM 15510 / CIP 108128 / LMG 27833 / NCIMB 13906 / BL2)).